The primary structure comprises 225 residues: Uracil-DNA glycosylase (225 aa).

Asp68 (proton acceptor) is an active-site residue.

This sequence belongs to the uracil-DNA glycosylase (UDG) superfamily. UNG family.

It localises to the cytoplasm. It catalyses the reaction Hydrolyzes single-stranded DNA or mismatched double-stranded DNA and polynucleotides, releasing free uracil.. Its function is as follows. Excises uracil residues from the DNA which can arise as a result of misincorporation of dUMP residues by DNA polymerase or due to deamination of cytosine. This Mycolicibacterium vanbaalenii (strain DSM 7251 / JCM 13017 / BCRC 16820 / KCTC 9966 / NRRL B-24157 / PYR-1) (Mycobacterium vanbaalenii) protein is Uracil-DNA glycosylase.